The primary structure comprises 83 residues: Cell division topological specificity factor (83 aa).

It belongs to the MinE family.

Its function is as follows. Prevents the cell division inhibition by proteins MinC and MinD at internal division sites while permitting inhibition at polar sites. This ensures cell division at the proper site by restricting the formation of a division septum at the midpoint of the long axis of the cell. The chain is Cell division topological specificity factor from Acidithiobacillus ferrooxidans (strain ATCC 23270 / DSM 14882 / CIP 104768 / NCIMB 8455) (Ferrobacillus ferrooxidans (strain ATCC 23270)).